A 443-amino-acid chain; its full sequence is Putative rhamnogalacturonase D (443 aa).

An N-terminal signal peptide occupies residues 1–16; the sequence is MLVTSLIALLPAIAAA. A disulfide bond links Cys37 and Cys63. N-linked (GlcNAc...) asparagine glycans are attached at residues Asn47, Asn103, Asn124, and Asn152. The Proton donor role is filled by Asp215. Residues Cys217 and Cys234 are joined by a disulfide bond. 5 N-linked (GlcNAc...) asparagine glycosylation sites follow: Asn235, Asn250, Asn263, Asn276, and Asn281. Residues Cys338 and Cys344 are joined by a disulfide bond. Asn346 carries N-linked (GlcNAc...) asparagine glycosylation. Residues Cys366 and Cys375 are joined by a disulfide bond. The N-linked (GlcNAc...) asparagine glycan is linked to Asn380.

It belongs to the glycosyl hydrolase 28 family.

It is found in the secreted. Functionally, pectinolytic enzymes consist of four classes of enzymes: pectine lyase, polygalacturonase, pectin methylesterase and rhamnogalacturonase. Hydrolyzes alpha-D-galacturonopyranosyl-(1,2)-alpha-L-rhamnopyranosyl linkages in the backbone of the hairy regions of pectins. The sequence is that of Putative rhamnogalacturonase D (rhgD) from Aspergillus niger (strain ATCC MYA-4892 / CBS 513.88 / FGSC A1513).